The primary structure comprises 27 residues: Phospholipase A2 taicatoxin (27 aa).

This sequence belongs to the phospholipase A2 family. Group I subfamily. Heterotrimer composed of an alpha-neurotoxin-like peptide of 8 kDa (AC P0CJ35), this neurotoxic phospholipase of 16 kDa and a serine protease inhibitor of 7 kDa (AC B7S4N9) at an approximate stoichiometry of 1:1:4; non-covalently linked. Requires Ca(2+) as cofactor. Contains 7 disulfide bonds. Expressed by the venom gland.

Its subcellular location is the secreted. The catalysed reaction is a 1,2-diacyl-sn-glycero-3-phosphocholine + H2O = a 1-acyl-sn-glycero-3-phosphocholine + a fatty acid + H(+). In terms of biological role, heterotrimer: blocks the voltage-dependent L-type calcium channels from the heart, and the small conductance calcium-activated potassium channels in the chromaffin cells and in the brain. Is very toxic to mice. Monomer: Snake venom phospholipase A2 (PLA2) that has neurotoxic activities. Voltage-dependently affects ionic currents in chick (Gallus domesticus) dorsal root ganglion cells. PLA2 catalyzes the calcium-dependent hydrolysis of the 2-acyl groups in 3-sn-phosphoglycerides. The sequence is that of Phospholipase A2 taicatoxin from Oxyuranus scutellatus scutellatus (Australian taipan).